Consider the following 326-residue polypeptide: tRNA uridine(34) hydroxylase (326 aa).

The 95-residue stretch at 123–217 folds into the Rhodanese domain; that stretch reads SDPDVLLVDT…YLEEVPEENS (95 aa). The active-site Cysteine persulfide intermediate is cysteine 177. Residues 276-320 show a composition bias toward basic and acidic residues; the sequence is EEQKSRFREREKQVQLANERGETHVGGDAAKLIEQRKQEKKEKKQ. Residues 276–326 form a disordered region; the sequence is EEQKSRFREREKQVQLANERGETHVGGDAAKLIEQRKQEKKEKKQQQRSSK.

Belongs to the TrhO family.

It catalyses the reaction uridine(34) in tRNA + AH2 + O2 = 5-hydroxyuridine(34) in tRNA + A + H2O. In terms of biological role, catalyzes oxygen-dependent 5-hydroxyuridine (ho5U) modification at position 34 in tRNAs. This Aliivibrio salmonicida (strain LFI1238) (Vibrio salmonicida (strain LFI1238)) protein is tRNA uridine(34) hydroxylase.